Reading from the N-terminus, the 322-residue chain is Atrochrysone carboxyl ACP thioesterase nsrC (322 aa).

Zn(2+)-binding residues include H105, H107, D109, and H110. Catalysis depends on D109, which acts as the Proton donor/acceptor.

Belongs to the metallo-beta-lactamase superfamily. Zn(2+) serves as cofactor.

It carries out the reaction atrochrysone carboxyl-[ACP] + H2O = atrochrysone carboxylate + holo-[ACP] + H(+). Its pathway is secondary metabolite biosynthesis. Functionally, atrochrysone carboxyl ACP thioesterase; part of the gene cluster that mediates the biosynthesis of the tetrahydroxanthone dimer neosartorin, which exhibits antibacterial activity. The two different monomeric units appear to be synthesized by the same set of enzymes, among which the Baeyer-Villiger monooxygenase nsrF is the key enzyme for the divergence of the biosynthetic routes. The pathway begins with the synthesis of atrochrysone thioester by the polyketide synthase nsrB. The atrochrysone carboxyl ACP thioesterase nsrC then breaks the thioester bond and releases the atrochrysone carboxylic acid from AacuL. Atrochrysone carboxylic acid is decarboxylated by the decarboxylase nsrE, and oxidized by the anthrone oxygenase nsrD to yield emodin. Emodin is then reduced to emodin hydroquinone by the oxidoreductase nsrR. A-ring reduction by the short chain dehydrogenase nsrJ, dehydration by the scytalone dehydratase-like protein nsrI and probable spontaneous re-oxidation, results in overall deoxygenation to chrysophanol. The Baeyer-Villiger monooxygenase nsrF accepts chrysophanol as a substrate to insert one oxygen atom at two different positions to yield the precursors of both monomric units. NsrF is promiscuous/flexible in interacting with the 2 (non methylated and methylated) aromatic rings of chrysophanol, thus diverging the biosynthetic pathway at this point. After the hydrolysis of the lactones, methylesterification by the methyltransferase nsrG yields respectively moniliphenone and 2,2',6'-trihydroxy-4-methyl-6-methoxya-cyldiphenylmethanone. The next steps are the hydroxylation by the FAD-dependent monooxygenase nsrK, followed by isomerization by the monooxygenase nsrQ. The short chain dehydrogenase/reductase nsrO then catalyzes the C-5 ketoreduction to give the xanthone skeleton of blennolide C and 5-acetylblennolide A. The acetyltransferase nsrL has a strict substrate specificity and uses only blennolide A but not blennolide C to yield 5-acetylblennolide A as the single-acetylated product. In the final step of the biosynthesis, the heterodimerization of the 2 xanthones, blennolide C and 5-acetylblennolide A, is catalyzed by the cytochrome P450 monooxygenase nsrP. NsrP can utilize at least three different xanthones as its substrates to perform the dimerization reaction. The chain is Atrochrysone carboxyl ACP thioesterase nsrC from Aspergillus novofumigatus (strain IBT 16806).